The primary structure comprises 374 residues: DNA replication and repair protein RecF (374 aa).

30–37 (GENAQGKT) provides a ligand contact to ATP.

The protein belongs to the RecF family.

The protein localises to the cytoplasm. In terms of biological role, the RecF protein is involved in DNA metabolism; it is required for DNA replication and normal SOS inducibility. RecF binds preferentially to single-stranded, linear DNA. It also seems to bind ATP. The sequence is that of DNA replication and repair protein RecF from Lactiplantibacillus plantarum (strain ATCC BAA-793 / NCIMB 8826 / WCFS1) (Lactobacillus plantarum).